A 313-amino-acid chain; its full sequence is Probable cell division protein WhiA (313 aa).

The segment at residues 277–311 (SLKEVAAQVPDGPISKSGVNHRFQKIREIAKQLKE) is a DNA-binding region (H-T-H motif).

The protein belongs to the WhiA family.

In terms of biological role, involved in cell division and chromosome segregation. This is Probable cell division protein WhiA from Lactobacillus johnsonii (strain CNCM I-12250 / La1 / NCC 533).